The primary structure comprises 271 residues: Formamidopyrimidine-DNA glycosylase (271 aa).

Pro-2 acts as the Schiff-base intermediate with DNA in catalysis. Glu-3 functions as the Proton donor in the catalytic mechanism. Lys-57 functions as the Proton donor; for beta-elimination activity in the catalytic mechanism. Positions 90, 109, and 151 each coordinate DNA. The segment at 236 to 270 adopts an FPG-type zinc-finger fold; that stretch reads HVYGRGGETCTECGHLLSEIRLGQRTTVFCSLCQT. Arg-260 acts as the Proton donor; for delta-elimination activity in catalysis.

Belongs to the FPG family. Monomer. Zn(2+) serves as cofactor.

It carries out the reaction Hydrolysis of DNA containing ring-opened 7-methylguanine residues, releasing 2,6-diamino-4-hydroxy-5-(N-methyl)formamidopyrimidine.. The enzyme catalyses 2'-deoxyribonucleotide-(2'-deoxyribose 5'-phosphate)-2'-deoxyribonucleotide-DNA = a 3'-end 2'-deoxyribonucleotide-(2,3-dehydro-2,3-deoxyribose 5'-phosphate)-DNA + a 5'-end 5'-phospho-2'-deoxyribonucleoside-DNA + H(+). Its function is as follows. Involved in base excision repair of DNA damaged by oxidation or by mutagenic agents. Acts as a DNA glycosylase that recognizes and removes damaged bases. Has a preference for oxidized purines, such as 7,8-dihydro-8-oxoguanine (8-oxoG). Has AP (apurinic/apyrimidinic) lyase activity and introduces nicks in the DNA strand. Cleaves the DNA backbone by beta-delta elimination to generate a single-strand break at the site of the removed base with both 3'- and 5'-phosphates. The protein is Formamidopyrimidine-DNA glycosylase of Shewanella amazonensis (strain ATCC BAA-1098 / SB2B).